A 601-amino-acid chain; its full sequence is Leucine zipper putative tumor suppressor 1 (601 aa).

A lipid anchor (N-myristoyl glycine) is attached at Gly2. The disordered stretch occupies residues 135-190 (GAILHSSPESTNHQLHPMPPDKPKEQELKPGLCSGALSDSGRNSMSSLPTHSTTSS). The segment covering 153–162 (PPDKPKEQEL) has biased composition (basic and acidic residues). The segment covering 174 to 190 (SGRNSMSSLPTHSTTSS) has biased composition (polar residues). Positions 255–573 (PLSTDECTIQ…RLEKALQQLA (319 aa)) form a coiled coil.

Belongs to the LZTS family. As to quaternary structure, binds EEF1G, TLK2 and CDK1. In terms of processing, phosphorylated on serine residues. Hyperphosphorylated by the cAMP-dependent kinase PKA during cell-cycle progression. Highly expressed in brain, in particular in cortex, the CA2 region of the hippocampus, olfactory bulb, striatum and pons. Not detectable in the other tissues tested.

It is found in the cytoplasm. The protein resides in the cell membrane. The protein localises to the cell projection. Its subcellular location is the dendritic spine. It localises to the postsynaptic density. It is found in the synapse. In terms of biological role, involved in the regulation of cell growth. May stabilize the active CDC2-cyclin B1 complex and thereby contribute to the regulation of the cell cycle and the prevention of uncontrolled cell proliferation. May act as tumor suppressor. The sequence is that of Leucine zipper putative tumor suppressor 1 (Lzts1) from Rattus norvegicus (Rat).